The following is a 221-amino-acid chain: Probable septum site-determining protein MinC (221 aa).

The protein belongs to the MinC family. In terms of assembly, interacts with MinD and FtsZ.

Its function is as follows. Cell division inhibitor that blocks the formation of polar Z ring septums. Rapidly oscillates between the poles of the cell to destabilize FtsZ filaments that have formed before they mature into polar Z rings. Prevents FtsZ polymerization. The sequence is that of Probable septum site-determining protein MinC from Aliivibrio fischeri (strain MJ11) (Vibrio fischeri).